A 483-amino-acid chain; its full sequence is Probable glycine dehydrogenase (decarboxylating) subunit 2 (483 aa).

Residues 1–33 (MLIFEHSRKNRRNYSQAPATRPAKNNIPDHLKR) form a disordered region. Position 264 is an N6-(pyridoxal phosphate)lysine (Lys264).

Belongs to the GcvP family. C-terminal subunit subfamily. The glycine cleavage system is composed of four proteins: P, T, L and H. In this organism, the P 'protein' is a heterodimer of two subunits. Pyridoxal 5'-phosphate is required as a cofactor.

The enzyme catalyses N(6)-[(R)-lipoyl]-L-lysyl-[glycine-cleavage complex H protein] + glycine + H(+) = N(6)-[(R)-S(8)-aminomethyldihydrolipoyl]-L-lysyl-[glycine-cleavage complex H protein] + CO2. Functionally, the glycine cleavage system catalyzes the degradation of glycine. The P protein binds the alpha-amino group of glycine through its pyridoxal phosphate cofactor; CO(2) is released and the remaining methylamine moiety is then transferred to the lipoamide cofactor of the H protein. The protein is Probable glycine dehydrogenase (decarboxylating) subunit 2 of Nitrosomonas europaea (strain ATCC 19718 / CIP 103999 / KCTC 2705 / NBRC 14298).